The chain runs to 492 residues: 3-octaprenyl-4-hydroxybenzoate carboxy-lyase (492 aa).

Asn-175 provides a ligand contact to Mn(2+). Prenylated FMN-binding positions include 178-180 (IYR), 192-194 (RWL), and 197-198 (RG). Glu-241 serves as a coordination point for Mn(2+). The active-site Proton donor is Asp-290.

It belongs to the UbiD family. As to quaternary structure, homohexamer. The cofactor is prenylated FMN. It depends on Mn(2+) as a cofactor.

Its subcellular location is the cell membrane. It catalyses the reaction a 4-hydroxy-3-(all-trans-polyprenyl)benzoate + H(+) = a 2-(all-trans-polyprenyl)phenol + CO2. The protein operates within cofactor biosynthesis; ubiquinone biosynthesis. Catalyzes the decarboxylation of 3-octaprenyl-4-hydroxy benzoate to 2-octaprenylphenol, an intermediate step in ubiquinone biosynthesis. This is 3-octaprenyl-4-hydroxybenzoate carboxy-lyase from Salmonella paratyphi A (strain ATCC 9150 / SARB42).